The chain runs to 85 residues: Growth factor (85 aa).

The N-terminal stretch at 1–19 (MVPRDLVATLLCAMCIVQA) is a signal peptide. Residues 33–77 (RIKLCNDDYKNYCLNNGTCFTVALNNVSLNPFCACHINYVGSRCQ) form the EGF-like domain. 3 cysteine pairs are disulfide-bonded: C37/C51, C45/C65, and C67/C76. N48 and N58 each carry an N-linked (GlcNAc...) asparagine; by host glycan.

Its subcellular location is the secreted. Stimulates the growth of some tissues. In Oryctolagus cuniculus (Rabbit), this protein is Growth factor (MGF).